Consider the following 341-residue polypeptide: Beta-hexosaminidase (341 aa).

Residues Asp-61, Arg-69, Arg-134, and 164 to 165 each bind substrate; that span reads KH. His-177 acts as the Proton donor/acceptor in catalysis. Asp-249 (nucleophile) is an active-site residue.

This sequence belongs to the glycosyl hydrolase 3 family. NagZ subfamily.

It localises to the cytoplasm. The enzyme catalyses Hydrolysis of terminal non-reducing N-acetyl-D-hexosamine residues in N-acetyl-beta-D-hexosaminides.. Its pathway is cell wall biogenesis; peptidoglycan recycling. Functionally, plays a role in peptidoglycan recycling by cleaving the terminal beta-1,4-linked N-acetylglucosamine (GlcNAc) from peptide-linked peptidoglycan fragments, giving rise to free GlcNAc, anhydro-N-acetylmuramic acid and anhydro-N-acetylmuramic acid-linked peptides. This is Beta-hexosaminidase from Shewanella frigidimarina (strain NCIMB 400).